Here is a 466-residue protein sequence, read N- to C-terminus: Ribulose bisphosphate carboxylase large chain (466 aa).

Residue Lys-5 is modified to N6,N6,N6-trimethyllysine. Substrate contacts are provided by Asn-114 and Thr-164. Catalysis depends on Lys-166, which acts as the Proton acceptor. Residue Lys-168 coordinates substrate. The Mg(2+) site is built by Lys-192, Asp-194, and Glu-195. Lys-192 carries the post-translational modification N6-carboxylysine. His-285 (proton acceptor) is an active-site residue. 3 residues coordinate substrate: Arg-286, His-318, and Ser-370.

It belongs to the RuBisCO large chain family. Type I subfamily. In terms of assembly, heterohexadecamer of 8 large chains and 8 small chains; disulfide-linked. The disulfide link is formed within the large subunit homodimers. Requires Mg(2+) as cofactor. The disulfide bond which can form in the large chain dimeric partners within the hexadecamer appears to be associated with oxidative stress and protein turnover.

The protein localises to the plastid. It localises to the chloroplast. The catalysed reaction is 2 (2R)-3-phosphoglycerate + 2 H(+) = D-ribulose 1,5-bisphosphate + CO2 + H2O. It catalyses the reaction D-ribulose 1,5-bisphosphate + O2 = 2-phosphoglycolate + (2R)-3-phosphoglycerate + 2 H(+). Functionally, ruBisCO catalyzes two reactions: the carboxylation of D-ribulose 1,5-bisphosphate, the primary event in carbon dioxide fixation, as well as the oxidative fragmentation of the pentose substrate in the photorespiration process. Both reactions occur simultaneously and in competition at the same active site. This chain is Ribulose bisphosphate carboxylase large chain, found in Isophysis tasmanica.